Here is a 195-residue protein sequence, read N- to C-terminus: Recombination protein RecR (195 aa).

A C4-type zinc finger spans residues 53-68 (CSVCFNIDVKSPCSIC). In terms of domain architecture, Toprim spans 76–171 (QLLCIVEELG…KITRLACGIP (96 aa)).

The protein belongs to the RecR family.

Its function is as follows. May play a role in DNA repair. It seems to be involved in an RecBC-independent recombinational process of DNA repair. It may act with RecF and RecO. This Ehrlichia canis (strain Jake) protein is Recombination protein RecR.